We begin with the raw amino-acid sequence, 142 residues long: Peptide methionine sulfoxide reductase MsrB (142 aa).

The MsrB domain maps to 2–125 (LKKDKSELTD…NSAAIQFIPY (124 aa)). Cysteine 114 functions as the Nucleophile in the catalytic mechanism.

Belongs to the MsrB Met sulfoxide reductase family.

It catalyses the reaction L-methionyl-[protein] + [thioredoxin]-disulfide + H2O = L-methionyl-(R)-S-oxide-[protein] + [thioredoxin]-dithiol. This Staphylococcus aureus (strain Mu3 / ATCC 700698) protein is Peptide methionine sulfoxide reductase MsrB.